Here is a 340-residue protein sequence, read N- to C-terminus: Homeobox protein DBX2 (340 aa).

Positions glycine 185–lysine 244 form a DNA-binding region, homeobox. The tract at residues glutamine 283–proline 313 is disordered.

Belongs to the H2.0 homeobox family.

Its subcellular location is the nucleus. This chain is Homeobox protein DBX2 (DBX2), found in Bos taurus (Bovine).